A 302-amino-acid chain; its full sequence is Ectoine dioxygenase (302 aa).

Gln-128 is an L-ectoine binding site. Lys-134 lines the 2-oxoglutarate pocket. Fe cation-binding residues include His-145, Asp-147, and His-246.

The protein belongs to the PhyH family. EctD subfamily. Homodimer. Fe(2+) is required as a cofactor.

It carries out the reaction L-ectoine + 2-oxoglutarate + O2 = 5-hydroxyectoine + succinate + CO2. Its function is as follows. Involved in the biosynthesis of 5-hydroxyectoine, called compatible solute, which helps organisms to survive extreme osmotic stress by acting as a highly soluble organic osmolyte. Catalyzes the 2-oxoglutarate-dependent selective hydroxylation of L-ectoine to yield (4S,5S)-5-hydroxyectoine. The sequence is that of Ectoine dioxygenase from Stutzerimonas stutzeri (strain A1501) (Pseudomonas stutzeri).